A 291-amino-acid polypeptide reads, in one-letter code: Taste receptor type 2 member 16 (291 aa).

A topological domain (extracellular) is located at residue methionine 1. Residues 2–22 (IPIQLTVFFMIIYVLESLTII) form a helical membrane-spanning segment. Residues 23–41 (VQSSLIVAVLGREWLQVRR) are Cytoplasmic-facing. Residues 42–62 (LMPVDMILISLGISRFCLQWA) traverse the membrane as a helical segment. Topologically, residues 63 to 84 (SMLNNFCSYFNLNYVLCNLTIT) are extracellular. N-linked (GlcNAc...) asparagine glycosylation occurs at asparagine 80. Residues 85–105 (WEFFNILTFWLNSLLTVFYCI) traverse the membrane as a helical segment. Residues 106–125 (KASSFTHHIFLWLRWRILRL) lie on the Cytoplasmic side of the membrane. The helical transmembrane segment at 126–146 (FPWILLGSLMITCVTIIPSAI) threads the bilayer. Residues 147-182 (GNYIQIQLLTMEHLPRNSTVTDKLEKFHQYQFQAHT) lie on the Extracellular side of the membrane. Asparagine 163 is a glycosylation site (N-linked (GlcNAc...) asparagine). The helical transmembrane segment at 183–203 (VALVIPFILFLASTILLMASL) threads the bilayer. Residues 204 to 228 (TKQIQHHSTGHCNPSMKAHFTALRS) are Cytoplasmic-facing. Residues 229-249 (LAVLFIVFTSYFLTILITIIG) traverse the membrane as a helical segment. The Extracellular portion of the chain corresponds to 250–257 (TLFDKRCW). A helical transmembrane segment spans residues 258–278 (LWVWEAFVYAFILMHSTSLML). The Cytoplasmic segment spans residues 279–291 (SSPTLKRILKGKC).

The protein belongs to the G-protein coupled receptor T2R family. As to quaternary structure, interacts with RTP3 and RTP4.

The protein resides in the cell membrane. In terms of biological role, receptor that may play a role in the perception of bitterness and is gustducin-linked. May play a role in sensing the chemical composition of the gastrointestinal content. The activity of this receptor may stimulate alpha gustducin, mediate PLC-beta-2 activation and lead to the gating of TRPM5. This is Taste receptor type 2 member 16 (TAS2R16) from Pan paniscus (Pygmy chimpanzee).